Here is a 171-residue protein sequence, read N- to C-terminus: Protein phosphatase 1 regulatory subunit 1A (171 aa).

Position 1 is an N-acetylmethionine (Met1). The tract at residues Lys9–Phe12 is essential for activity. Residues Leu17–Val171 are disordered. The segment covering Pro19 to Ile29 has biased composition (basic and acidic residues). A Phosphothreonine; by PKA modification is found at Thr35. An essential for activity region spans residues Thr42–Arg54. Residues Ser43, Ser46, Ser47, and Ser67 each carry the phosphoserine modification. Residues Gly122–Ala133 show a composition bias toward polar residues. Over residues Ala137–Gly148 the composition is skewed to basic and acidic residues. An interaction with PPP1R15A region spans residues Thr143–Val171.

It belongs to the protein phosphatase inhibitor 1 family. In terms of assembly, interacts with PPP1R15A. Post-translationally, phosphorylation of Thr-35 is required for activity.

Its function is as follows. Inhibitor of protein-phosphatase 1. This protein may be important in hormonal control of glycogen metabolism. Hormones that elevate intracellular cAMP increase I-1 activity in many tissues. I-1 activation may impose cAMP control over proteins that are not directly phosphorylated by PKA. Following a rise in intracellular calcium, I-1 is inactivated by calcineurin (or PP2B). Does not inhibit type-2 phosphatases. This chain is Protein phosphatase 1 regulatory subunit 1A (Ppp1r1a), found in Rattus norvegicus (Rat).